We begin with the raw amino-acid sequence, 357 residues long: Arginine kinase (357 aa).

An N-acetylalanine modification is found at Ala2. One can recognise a Phosphagen kinase N-terminal domain in the interval 9–91 (KLDEGFKKLE…FDPIIEDYHK (83 aa)). 64–68 (GVGVY) contacts L-arginine. The 238-residue stretch at 119 to 356 (FVISTRVRCG…LELIKIEKEM (238 aa)) folds into the Phosphagen kinase C-terminal domain. Residues 122–126 (STRVR) and His185 contribute to the ATP site. Glu225 is an L-arginine binding site. Arg229 contributes to the ATP binding site. Cys271 is an L-arginine binding site. ATP contacts are provided by residues 280–284 (RASVH) and 309–314 (RGTRGE). Glu314 contributes to the L-arginine binding site.

Belongs to the ATP:guanido phosphotransferase family.

It carries out the reaction L-arginine + ATP = N(omega)-phospho-L-arginine + ADP + H(+). The sequence is that of Arginine kinase from Eriocheir sinensis (Chinese mitten crab).